The chain runs to 328 residues: Sin3 histone deacetylase corepressor complex component SDS3 (328 aa).

The segment covering 1 to 16 (MSAAGLLAPAPAQAGA) has biased composition (low complexity). Positions 1–65 (MSAAGLLAPA…DLAKHDEEDY (65 aa)) are disordered. Position 2 is an N-acetylserine (serine 2). A mediates interaction with USP17L2 region spans residues 2–170 (SAAGLLAPAP…IENEKLTMEL (169 aa)). 2 stretches are compositionally biased toward acidic residues: residues 23-37 (YPEE…EEDE) and 45-54 (SDEDTEDASE). A phosphoserine mark is found at serine 32 and serine 45. Threonine 49 carries the phosphothreonine modification. Phosphoserine is present on serine 53. Residues 56-65 (DLAKHDEEDY) are compositionally biased toward basic and acidic residues. A coiled-coil region spans residues 66-171 (VEMKEQMYQD…ENEKLTMELT (106 aa)). Residues lysine 69, lysine 178, and lysine 201 each participate in a glycyl lysine isopeptide (Lys-Gly) (interchain with G-Cter in SUMO2) cross-link. The segment at 188-226 (RPNDPVPIPDKRRKPAPAQLNYLLTDEQIMEDLRTLNKL) is sin3 interaction domain (SID). The interval 226 to 252 (LKSPKRPASPSSPEHLPATPAESPAQR) is disordered. Phosphoserine is present on residues serine 228, serine 234, and serine 237. The residue at position 244 (threonine 244) is a Phosphothreonine.

It belongs to the SDS3 family. In terms of assembly, interacts with HCFC1. Homodimer. Component of the SIN3 histone deacetylase (HDAC) corepressor complex. Interacts with SIN3A. Interaction with SIN3B enhances the interaction between SIN3B and HDAC1 to form a complex. Component of a mSin3A corepressor complex that contains SIN3A, SAP130, SUDS3/SAP45, ARID4B/SAP180, HDAC1 and HDAC2. Interacts with USP17L2; the interaction is direct. Interacts with FOXK2. Polyubiquitinated. 'Lys-63'-polyubiquitinated SUDS3 positively regulates histone deacetylation. Regulated through deubiquitination by USP17L2/USP17 that cleaves 'Lys-63'-linked ubiquitin chains.

Its subcellular location is the nucleus. Regulatory protein which represses transcription and augments histone deacetylase activity of HDAC1. May have a potential role in tumor suppressor pathways through regulation of apoptosis. May function in the assembly and/or enzymatic activity of the mSin3A corepressor complex or in mediating interactions between the complex and other regulatory complexes. The chain is Sin3 histone deacetylase corepressor complex component SDS3 (SUDS3) from Pongo abelii (Sumatran orangutan).